The sequence spans 26 residues: Thrombin-like enzyme LmrSP-3 (26 aa).

This sequence belongs to the peptidase S1 family. Snake venom subfamily. Expressed by the venom gland.

Its subcellular location is the secreted. Functionally, thrombin-like snake venom serine protease that cleaves alpha-chain of fibrinogen (FGA) releases only fibrinopeptide A. Shows coagulant, esterase and amidase activities. The chain is Thrombin-like enzyme LmrSP-3 from Lachesis muta rhombeata (Bushmaster).